We begin with the raw amino-acid sequence, 201 residues long: Cytochrome c biogenesis ATP-binding export protein CcmA (201 aa).

In terms of domain architecture, ABC transporter spans 3-200 (LIAENLGGER…EGAELRMGVA (198 aa)). 35–42 (GPNGSGKS) is an ATP binding site.

It belongs to the ABC transporter superfamily. CcmA exporter (TC 3.A.1.107) family. As to quaternary structure, the complex is composed of two ATP-binding proteins (CcmA) and two transmembrane proteins (CcmB).

Its subcellular location is the cell inner membrane. The enzyme catalyses heme b(in) + ATP + H2O = heme b(out) + ADP + phosphate + H(+). Functionally, part of the ABC transporter complex CcmAB involved in the biogenesis of c-type cytochromes; once thought to export heme, this seems not to be the case, but its exact role is uncertain. Responsible for energy coupling to the transport system. The chain is Cytochrome c biogenesis ATP-binding export protein CcmA from Mesorhizobium japonicum (strain LMG 29417 / CECT 9101 / MAFF 303099) (Mesorhizobium loti (strain MAFF 303099)).